The following is a 338-amino-acid chain: Putative peptide import ATP-binding protein BOV_A0348 (338 aa).

In terms of domain architecture, ABC transporter spans 10–263; the sequence is KGLRTVFRTR…PRHPYTMGLL (254 aa). 43–50 is a binding site for ATP; sequence GESGSGKS.

The protein belongs to the ABC transporter superfamily. In terms of assembly, the complex is composed of two ATP-binding proteins (BOV_A0347 and BOV_A0348), two transmembrane proteins (BOV_A0350 and BOV_A0351) and a solute-binding protein (BOV_A0352).

It is found in the cell inner membrane. In terms of biological role, probably part of an ABC transporter complex that could be involved in peptide import. Probably responsible for energy coupling to the transport system. This is Putative peptide import ATP-binding protein BOV_A0348 from Brucella ovis (strain ATCC 25840 / 63/290 / NCTC 10512).